A 228-amino-acid polypeptide reads, in one-letter code: Ribosomal RNA small subunit methyltransferase G (228 aa).

S-adenosyl-L-methionine contacts are provided by residues Gly-89, Leu-94, 140–141 (VE), and Arg-159.

This sequence belongs to the methyltransferase superfamily. RNA methyltransferase RsmG family.

It is found in the cytoplasm. It carries out the reaction guanosine(527) in 16S rRNA + S-adenosyl-L-methionine = N(7)-methylguanosine(527) in 16S rRNA + S-adenosyl-L-homocysteine. In terms of biological role, specifically methylates the N7 position of guanine in position 527 of 16S rRNA. This Burkholderia multivorans (strain ATCC 17616 / 249) protein is Ribosomal RNA small subunit methyltransferase G.